Reading from the N-terminus, the 501-residue chain is Alpha-internexin (501 aa).

A head region spans residues 1–87; sequence MSFGSEHYLC…SQAAARTNEY (87 aa). Phosphoserine is present on serine 72. The interval 88 to 129 is coil 1A; it reads KIIRTNEKEQLQGLNDRFAVFIEKVHQLETQNRALEAELAAL. Residues 94–407 form the IF rod domain; it reads EKEQLQGLND…KLLEGEETRF (314 aa). A linker 1 region spans residues 130–142; sequence RQRHAEPSRVGEL. The tract at residues 143-238 is coil 1B; the sequence is FQRELRELRA…QVHDEEVAEL (96 aa). Serine 219 is subject to Phosphoserine. A linker 2 region spans residues 239–262; it reads LATLQASSQAAAEVDVAVAKPDLT. Residues 263 to 408 form a coil 2 region; sequence SALREIRAQY…LLEGEETRFS (146 aa). Lysine 290 is subject to N6-acetyllysine. Residues serine 335 and serine 498 each carry the phosphoserine modification. The tail stretch occupies residues 409–501; sequence TGGLSISGLN…EESTSSSQKM (93 aa). The disordered stretch occupies residues 441-501; the sequence is SAGLSLKKEE…EESTSSSQKM (61 aa). The span at 488–501 shows a compositional bias: polar residues; the sequence is KSATEESTSSSQKM.

Belongs to the intermediate filament family. As to quaternary structure, forms homodimers (in vitro). Forms heterodimers with NEFL, NEFM or NEFH (in vitro). Post-translationally, O-glycosylated.

Class-IV neuronal intermediate filament that is able to self-assemble. It is involved in the morphogenesis of neurons. It may form an independent structural network without the involvement of other neurofilaments or it may cooperate with NEFL to form the filamentous backbone to which NEFM and NEFH attach to form the cross-bridges. May also cooperate with the neuronal intermediate filament protein PRPH to form filamentous networks. The sequence is that of Alpha-internexin (Ina) from Mus musculus (Mouse).